The following is a 410-amino-acid chain: Chitinase-3-like protein 1 (410 aa).

An N-terminal signal peptide occupies residues 1-48 (MGVKAAQTGIWASQGQSIRVVGFQAQTAHRAICLLGFVVLVLLQCCSA). The region spanning 49 to 410 (YKLVCYYTSW…NAIKDALAAT (362 aa)) is the GH18 domain. A disulfide bridge links Cys53 with Cys78. The N-linked (GlcNAc...) asparagine glycan is linked to Asn87. Residues 97–98 (EW), 124–127 (GGWN), Tyr168, 231–234 (MTYD), and Arg290 each bind chitin. Residues Cys327 and Cys391 are joined by a disulfide bond. The tract at residues 351-365 (QWVGYDDQESVKSKV) is important for AKT1 activation and IL8 production. Trp379 lines the chitin pocket.

It belongs to the glycosyl hydrolase 18 family. As to quaternary structure, monomer.

It localises to the secreted. Its subcellular location is the extracellular space. It is found in the cytoplasm. The protein localises to the perinuclear region. The protein resides in the endoplasmic reticulum. In terms of biological role, carbohydrate-binding lectin with a preference for chitin. Has no chitinase activity. May play a role in tissue remodeling and in the capacity of cells to respond to and cope with changes in their environment. Plays a role in T-helper cell type 2 (Th2) inflammatory response and IL-13-induced inflammation, regulating allergen sensitization, inflammatory cell apoptosis, dendritic cell accumulation and M2 macrophage differentiation. Facilitates invasion of pathogenic enteric bacteria into colonic mucosa and lymphoid organs. Mediates activation of AKT1 signaling pathway and subsequent IL8 production in colonic epithelial cells. Regulates antibacterial responses in lung by contributing to macrophage bacterial killing, controlling bacterial dissemination and augmenting host tolerance. Also regulates hyperoxia-induced injury, inflammation and epithelial apoptosis in lung. In Pongo abelii (Sumatran orangutan), this protein is Chitinase-3-like protein 1 (CHI3L1).